Here is a 246-residue protein sequence, read N- to C-terminus: tRNA (guanine-N(7)-)-methyltransferase (246 aa).

Glutamate 76, glutamate 101, aspartate 128, and aspartate 151 together coordinate S-adenosyl-L-methionine. Residue aspartate 151 is part of the active site. Lysine 155 is a binding site for substrate. Positions 157–162 (RHNKRR) are interaction with RNA. Residues aspartate 187 and 222-225 (TKFE) contribute to the substrate site.

This sequence belongs to the class I-like SAM-binding methyltransferase superfamily. TrmB family.

The catalysed reaction is guanosine(46) in tRNA + S-adenosyl-L-methionine = N(7)-methylguanosine(46) in tRNA + S-adenosyl-L-homocysteine. It participates in tRNA modification; N(7)-methylguanine-tRNA biosynthesis. In terms of biological role, catalyzes the formation of N(7)-methylguanine at position 46 (m7G46) in tRNA. This is tRNA (guanine-N(7)-)-methyltransferase from Dechloromonas aromatica (strain RCB).